A 465-amino-acid chain; its full sequence is Mitochondrial distribution and morphology protein 10 (465 aa).

The protein belongs to the MDM10 family. As to quaternary structure, component of the ER-mitochondria encounter structure (ERMES) or MDM complex, composed of MMM1, MDM10, MDM12 and MDM34. Associates with the mitochondrial outer membrane sorting assembly machinery SAM(core) complex.

The protein resides in the mitochondrion outer membrane. In terms of biological role, component of the ERMES/MDM complex, which serves as a molecular tether to connect the endoplasmic reticulum and mitochondria. Components of this complex are involved in the control of mitochondrial shape and protein biogenesis and may function in phospholipid exchange. MDM10 is involved in the late assembly steps of the general translocase of the mitochondrial outer membrane (TOM complex). Functions in the TOM40-specific route of the assembly of outer membrane beta-barrel proteins, including the association of TOM40 with the receptor TOM22 and small TOM proteins. Can associate with the SAM(core) complex as well as the MDM12-MMM1 complex, both involved in late steps of the major beta-barrel assembly pathway, that is responsible for biogenesis of all outer membrane beta-barrel proteins. May act as a switch that shuttles between both complexes and channels precursor proteins into the TOM40-specific pathway. Plays a role in mitochondrial morphology and in the inheritance of mitochondria. The polypeptide is Mitochondrial distribution and morphology protein 10 (Eremothecium gossypii (strain ATCC 10895 / CBS 109.51 / FGSC 9923 / NRRL Y-1056) (Yeast)).